The following is a 646-amino-acid chain: Chaperone protein DnaK (646 aa).

A Phosphothreonine; by autocatalysis modification is found at T197. The disordered stretch occupies residues 599 to 646 (QQGAQAGADPNAGSSQGAQAGTDYGTSGPKTGTADDVDYEVVNDDNDK). Over residues 610–628 (AGSSQGAQAGTDYGTSGPK) the composition is skewed to polar residues. Acidic residues predominate over residues 633–646 (DDVDYEVVNDDNDK).

Belongs to the heat shock protein 70 family.

Acts as a chaperone. The sequence is that of Chaperone protein DnaK from Treponema denticola (strain ATCC 35405 / DSM 14222 / CIP 103919 / JCM 8153 / KCTC 15104).